A 139-amino-acid polypeptide reads, in one-letter code: Translation initiation factor 2 subunit beta (139 aa).

This sequence belongs to the eIF-2-beta/eIF-5 family. As to quaternary structure, heterotrimer composed of an alpha, a beta and a gamma chain.

In terms of biological role, eIF-2 functions in the early steps of protein synthesis by forming a ternary complex with GTP and initiator tRNA. This chain is Translation initiation factor 2 subunit beta, found in Saccharolobus islandicus (strain Y.N.15.51 / Yellowstone #2) (Sulfolobus islandicus).